Here is a 231-residue protein sequence, read N- to C-terminus: uncharacterized protein (231 aa).

The first 19 residues, 1-19 (MKFKFLLTPLLSSVLFLSA), serve as a signal peptide directing secretion. Cys20 carries N-palmitoyl cysteine lipidation. A lipid anchor (S-diacylglycerol cysteine) is attached at Cys20.

This sequence belongs to the MG439/MG440 family.

It localises to the cell membrane. This is an uncharacterized protein from Mycoplasma pneumoniae (strain ATCC 29342 / M129 / Subtype 1) (Mycoplasmoides pneumoniae).